Consider the following 258-residue polypeptide: Leucyl/phenylalanyl-tRNA--protein transferase (258 aa).

It belongs to the L/F-transferase family.

The protein localises to the cytoplasm. The enzyme catalyses N-terminal L-lysyl-[protein] + L-leucyl-tRNA(Leu) = N-terminal L-leucyl-L-lysyl-[protein] + tRNA(Leu) + H(+). It catalyses the reaction N-terminal L-arginyl-[protein] + L-leucyl-tRNA(Leu) = N-terminal L-leucyl-L-arginyl-[protein] + tRNA(Leu) + H(+). It carries out the reaction L-phenylalanyl-tRNA(Phe) + an N-terminal L-alpha-aminoacyl-[protein] = an N-terminal L-phenylalanyl-L-alpha-aminoacyl-[protein] + tRNA(Phe). Its function is as follows. Functions in the N-end rule pathway of protein degradation where it conjugates Leu, Phe and, less efficiently, Met from aminoacyl-tRNAs to the N-termini of proteins containing an N-terminal arginine or lysine. This chain is Leucyl/phenylalanyl-tRNA--protein transferase, found in Alkalilimnicola ehrlichii (strain ATCC BAA-1101 / DSM 17681 / MLHE-1).